The primary structure comprises 243 residues: Type III pantothenate kinase (243 aa).

Position 6-13 (D6–K13) interacts with ATP. Residues Y86 and G93–R96 contribute to the substrate site. The Proton acceptor role is filled by D95. D116 is a binding site for K(+). T119 contributes to the ATP binding site. A substrate-binding site is contributed by T171.

This sequence belongs to the type III pantothenate kinase family. Homodimer. Requires NH4(+) as cofactor. It depends on K(+) as a cofactor.

It localises to the cytoplasm. It carries out the reaction (R)-pantothenate + ATP = (R)-4'-phosphopantothenate + ADP + H(+). The protein operates within cofactor biosynthesis; coenzyme A biosynthesis; CoA from (R)-pantothenate: step 1/5. Catalyzes the phosphorylation of pantothenate (Pan), the first step in CoA biosynthesis. This chain is Type III pantothenate kinase, found in Bacteroides fragilis (strain ATCC 25285 / DSM 2151 / CCUG 4856 / JCM 11019 / LMG 10263 / NCTC 9343 / Onslow / VPI 2553 / EN-2).